We begin with the raw amino-acid sequence, 197 residues long: Dephospho-CoA kinase (197 aa).

In terms of domain architecture, DPCK spans I2–R197. An ATP-binding site is contributed by A10 to T15.

This sequence belongs to the CoaE family.

It localises to the cytoplasm. It carries out the reaction 3'-dephospho-CoA + ATP = ADP + CoA + H(+). It participates in cofactor biosynthesis; coenzyme A biosynthesis; CoA from (R)-pantothenate: step 5/5. In terms of biological role, catalyzes the phosphorylation of the 3'-hydroxyl group of dephosphocoenzyme A to form coenzyme A. This chain is Dephospho-CoA kinase, found in Streptococcus pyogenes serotype M28 (strain MGAS6180).